We begin with the raw amino-acid sequence, 256 residues long: 1-(5-phosphoribosyl)-5-[(5-phosphoribosylamino)methylideneamino] imidazole-4-carboxamide isomerase (256 aa).

Aspartate 8 (proton acceptor) is an active-site residue. Catalysis depends on aspartate 129, which acts as the Proton donor.

The protein belongs to the HisA/HisF family.

The protein localises to the cytoplasm. It carries out the reaction 1-(5-phospho-beta-D-ribosyl)-5-[(5-phospho-beta-D-ribosylamino)methylideneamino]imidazole-4-carboxamide = 5-[(5-phospho-1-deoxy-D-ribulos-1-ylimino)methylamino]-1-(5-phospho-beta-D-ribosyl)imidazole-4-carboxamide. It functions in the pathway amino-acid biosynthesis; L-histidine biosynthesis; L-histidine from 5-phospho-alpha-D-ribose 1-diphosphate: step 4/9. This is 1-(5-phosphoribosyl)-5-[(5-phosphoribosylamino)methylideneamino] imidazole-4-carboxamide isomerase from Synechococcus sp. (strain WH7803).